Here is a 503-residue protein sequence, read N- to C-terminus: ATP-dependent RNA helicase dbp3 (503 aa).

Positions 1-13 (MGKRVSHNEGADR) are enriched in basic and acidic residues. The tract at residues 1–37 (MGKRVSHNEGADRRPKKKAKNEKPEKETMESPAADVT) is disordered. The short motif at 104–112 (SFASPTPIQ) is the Q motif element. The 177-residue stretch at 116–292 (WPLLFAGRDV…ATFMTSAVTV (177 aa)) folds into the Helicase ATP-binding domain. ATP is bound at residue 129 to 136 (AETGSGKT). Residues 239–242 (DEAD) carry the DEAD box motif. A Helicase C-terminal domain is found at 323-472 (RLVQLLSENQ…EVPQELLKFG (150 aa)).

This sequence belongs to the DEAD box helicase family. DDX5/DBP2 subfamily.

The protein resides in the nucleus. It is found in the nucleolus. It carries out the reaction ATP + H2O = ADP + phosphate + H(+). Functionally, ATP-dependent RNA helicase required for 60S ribosomal subunit synthesis. Involved in efficient pre-rRNA processing, predominantly at site A3, which is necessary for the normal formation of 25S and 5.8S rRNAs. This is ATP-dependent RNA helicase dbp3 (dbp3) from Aspergillus clavatus (strain ATCC 1007 / CBS 513.65 / DSM 816 / NCTC 3887 / NRRL 1 / QM 1276 / 107).